The sequence spans 687 residues: Dictomallein (687 aa).

2 disordered regions span residues 1-45 and 73-112; these read MGNG…SRRL and TAGG…STSA. Positions 233-501 constitute a Peptidase M66 domain; sequence PVFGTDADVQ…QAWIASRVLA (269 aa). A Zn(2+)-binding site is contributed by His393. Residue Glu394 is part of the active site. Zn(2+) contacts are provided by His397 and His403.

This sequence belongs to the dictomallein family. Zn(2+) serves as cofactor.

This Burkholderia mallei (strain NCTC 10247) protein is Dictomallein (dtmL).